We begin with the raw amino-acid sequence, 99 residues long: Large ribosomal subunit protein eL30 (99 aa).

It belongs to the eukaryotic ribosomal protein eL30 family.

The chain is Large ribosomal subunit protein eL30 from Methanosarcina acetivorans (strain ATCC 35395 / DSM 2834 / JCM 12185 / C2A).